A 323-amino-acid polypeptide reads, in one-letter code: Voltage-dependent calcium channel gamma-2 subunit (323 aa).

The helical transmembrane segment at 10–30 threads the bilayer; it reads MLLTTVGAFAAFSLMTIAVGT. An N-linked (GlcNAc...) asparagine glycan is attached at asparagine 48. Helical transmembrane passes span 104–124, 134–154, and 182–202; these read SSIF…CIAA, IILS…IGII, and FGAL…HMFI. Residues 233–261 form a disordered region; it reads YQRRSRSSSRSTEPSHSRDASPVGIKGFN. The residue at position 253 (serine 253) is a Phosphoserine. Tyrosine 271 carries the phosphotyrosine modification. Position 321 is a phosphothreonine (threonine 321).

The protein belongs to the PMP-22/EMP/MP20 family. CACNG subfamily. In terms of assembly, the L-type calcium channel is composed of five subunits: alpha-1, alpha-2/delta, beta and gamma. Interacts with the PDZ domains of DLG4/PSD-95 and DLG1/SAP97. May interact with GOPC. Acts as an auxiliary subunit for AMPA-selective glutamate receptors (AMPARs). Found in a complex with GRIA1, GRIA2, GRIA3, GRIA4, CNIH2, CNIH3, CACNG3, CACNG4, CACNG5, CACNG7 and CACNG8. Interacts with GRIA1 and GRIA2. Interacts with MPP2. Phosphorylation of Thr-321 impairs interaction with DLG1 and DLG4. As to expression, brain.

The protein resides in the membrane. It is found in the synapse. The protein localises to the synaptosome. Regulates the trafficking and gating properties of AMPA-selective glutamate receptors (AMPARs). Promotes their targeting to the cell membrane and synapses and modulates their gating properties by slowing their rates of activation, deactivation and desensitization. Does not show subunit-specific AMPA receptor regulation and regulates all AMPAR subunits. Thought to stabilize the calcium channel in an inactivated (closed) state. In Homo sapiens (Human), this protein is Voltage-dependent calcium channel gamma-2 subunit (CACNG2).